The chain runs to 1205 residues: A disintegrin and metalloproteinase with thrombospondin motifs 2 (1205 aa).

Residues 1 to 28 (MDPPAGAAGRLLCPALLLLLLLPLPADA) form the signal peptide. Residues 29–253 (RLAAAAADPP…VNSSRRRMRR (225 aa)) constitute a propeptide that is removed on maturation. Asn-104 and Asn-245 each carry an N-linked (GlcNAc...) asparagine glycan. The Peptidase M12B domain occupies 260-464 (YNIEVLLGVD…HSYDCLRDDP (205 aa)). 10 disulfide bridges follow: Cys-337/Cys-386, Cys-380/Cys-459, Cys-419/Cys-445, Cys-486/Cys-511, Cys-497/Cys-520, Cys-506/Cys-539, Cys-533/Cys-544, Cys-567/Cys-604, Cys-571/Cys-609, and Cys-582/Cys-594. His-402 contacts Zn(2+). Glu-403 is an active-site residue. Residues His-406 and His-412 each contribute to the Zn(2+) site. The 81-residue stretch at 474 to 554 (QLPGLHYSMN…IWLTPDILKR (81 aa)) folds into the Disintegrin domain. In terms of domain architecture, TSP type-1 1 spans 555–610 (DGNWGAWSPFGSCSRTCGTGVKFRTRQCDNPHPANGGRTCSGLAYDFQLCNSQDCP). The short motif at 685-687 (RGD) is the Cell attachment site element. Positions 717–845 (KVVKGTFSRS…NVDDNNVLED (129 aa)) are spacer. TSP type-1 domains lie at 848 to 906 (VGYE…NPQE), 908 to 968 (SQPV…NREL), and 969 to 1023 (CPGR…GPCP). N-linked (GlcNAc...) asparagine glycosylation is found at Asn-942, Asn-943, and Asn-987. Disulfide bonds link Cys-981/Cys-1017, Cys-985/Cys-1022, and Cys-996/Cys-1006. Asn-1025 carries an N-linked (GlcNAc...) asparagine glycan. The 39-residue stretch at 1053-1091 (SKGRCQGDKSVFCRMEVLSRYCSIPGYNKLCCKSCNPHD) folds into the PLAC domain. Asn-1092, Asn-1139, and Asn-1144 each carry an N-linked (GlcNAc...) asparagine glycan. A disordered region spans residues 1163–1184 (GLEDEVQPPNLIPRRPSPYEKT).

May belong to a multimeric complex. Binds specifically to collagen type XIV. It depends on Zn(2+) as a cofactor. In terms of processing, the N-terminus is blocked. Post-translationally, the precursor is cleaved by a furin endopeptidase. Glycosylated. Can be O-fucosylated by POFUT2 on a serine or a threonine residue found within the consensus sequence C1-X(2)-(S/T)-C2-G of the TSP type-1 repeat domains where C1 and C2 are the first and second cysteine residue of the repeat, respectively. Fucosylated repeats can then be further glycosylated by the addition of a beta-1,3-glucose residue by the glucosyltransferase, B3GALTL. Fucosylation mediates the efficient secretion of ADAMTS family members. Can also be C-glycosylated with one or two mannose molecules on tryptophan residues within the consensus sequence W-X-X-W of the TPRs, and N-glycosylated. These other glycosylations can also facilitate secretion. In terms of tissue distribution, enzymatic activity is detected at high level in all type I collagen-rich tissues such as skin, bones, tendons and aorta and at low level in brain and thymus. The mRNA levels were disproportionately high in heart, liver, retina and muscle.

It localises to the secreted. Its subcellular location is the extracellular space. The protein localises to the extracellular matrix. It catalyses the reaction Cleaves the N-propeptide of collagen chain alpha1(I) at Pro-|-Gln and of alpha1(II) and alpha2(I) at Ala-|-Gln.. Functionally, cleaves the propeptides of type I and II collagen prior to fibril assembly. Does not act on type III collagen. Cleaves lysyl oxidase LOX at a site downstream of its propeptide cleavage site to produce a short LOX form with reduced collagen-binding activity. This Bos taurus (Bovine) protein is A disintegrin and metalloproteinase with thrombospondin motifs 2 (ADAMTS2).